We begin with the raw amino-acid sequence, 258 residues long: MVALRLPRGLWTAALTVMLVVLGAPVAEGRDSPQDFVVQFKGECYFYNGTQRVWSVDRYIYNQEEFLRFDSDMGEYRAVTPLGRPDADYLNGQKEALEQKRAELDTVCKHNYQIEEGTTLQRRVQPTVTISPSKAEALNHHNLLVCAVTDFYPSQVKVQWFRNGQEETAGVVSTPLIRNGDWTYQVLVMLEMNLQRGDVYTCRVEHSSLQSPILVEWRAQSESAQSKMLSGVGGFVLGLIFLGLGLFIRHRSQKGLVR.

The signal sequence occupies residues 1-31 (MVALRLPRGLWTAALTVMLVVLGAPVAEGRD). Residues 32 to 123 (SPQDFVVQFK…IEEGTTLQRR (92 aa)) are beta-1. At 32–227 (SPQDFVVQFK…RAQSESAQSK (196 aa)) the chain is on the extracellular side. Disulfide bonds link Cys44–Cys108 and Cys146–Cys202. Asn48 carries an N-linked (GlcNAc...) asparagine glycan. Positions 124 to 217 (VQPTVTISPS…SLQSPILVEW (94 aa)) are beta-2. Residues 126–230 (PTVTISPSKA…SESAQSKMLS (105 aa)) enclose the Ig-like C1-type domain. Positions 218–227 (RAQSESAQSK) are connecting peptide. The chain crosses the membrane as a helical span at residues 228–248 (MLSGVGGFVLGLIFLGLGLFI). Over 249–258 (RHRSQKGLVR) the chain is Cytoplasmic.

The protein belongs to the MHC class II family.

Its subcellular location is the membrane. This is SLA class II histocompatibility antigen, DQ haplotype D beta chain from Sus scrofa (Pig).